The chain runs to 151 residues: Inactive oocyte-specific homeobox protein 2 (151 aa).

The segment at 1 to 97 (MAEGPSLHPK…PMASRKFRKE (97 aa)) is disordered. Residues 37 to 54 (MRQSPLVTPGSTTKSSLS) are compositionally biased toward polar residues.

The protein belongs to the paired homeobox family. Obox subfamily. Specifically expressed in oocytes and early embryos.

Its function is as follows. In contrast to other Obox family proteins, displays a truncated homeobox domain and does not bind DNA. The chain is Inactive oocyte-specific homeobox protein 2 from Mus musculus (Mouse).